The following is a 270-amino-acid chain: Coiled-coil domain-containing protein 3 (270 aa).

The signal sequence occupies residues 1–21 (MLRQLLLAALCLAGPPAPARA). N100 is a glycosylation site (N-linked (GlcNAc...) asparagine). Residues 188-251 (SVQKALFEEE…NQKLSEKLAA (64 aa)) are a coiled coil.

Homodimer. Expressed in umbilical vein endothelial cells (HUVEC), and at lower levels in aortic smooth muscle cells (HASMC).

Its subcellular location is the secreted. Functionally, negatively regulates TNF-alpha-induced pro-inflammatory response in endothelial cells (ECs) via inhibition of TNF-alpha-induced NF-kappaB activation in ECs. Positively regulates lipid accumulation in adipose cells. The polypeptide is Coiled-coil domain-containing protein 3 (CCDC3) (Homo sapiens (Human)).